The sequence spans 625 residues: pH-response transcription factor pacC/RIM101 (625 aa).

Over residues 1–34 (MSSQDQQQQQQPAQTQTSTSSSSNNENATTATSS) the composition is skewed to low complexity. The disordered stretch occupies residues 1-35 (MSSQDQQQQQQPAQTQTSTSSSSNNENATTATSSI). 3 consecutive C2H2-type zinc fingers follow at residues 45–70 (LLCQWEKCSERCPTPEALFDHICEKH), 81–105 (LTCGWNSCRTTTVKRDHITSHIRVH), and 111–133 (HKCEFCGKAFKRPQDLKKHVKTH). A compositionally biased stretch (polar residues) spans 391 to 416 (APMTATHSSHSVSSGTPALTPPSSSV). The interval 391-440 (APMTATHSSHSVSSGTPALTPPSSSVSYTSGNSPMSSSGMSPISRHSSTS) is disordered. Residues 417–438 (SYTSGNSPMSSSGMSPISRHSS) are compositionally biased toward low complexity. Residues 444 to 447 (YPNL) carry the YPX[LI] motif 1 motif. Disordered regions lie at residues 455–543 (SPHH…SPSV) and 584–625 (VKDE…DDDE). 2 stretches are compositionally biased toward polar residues: residues 461-472 (TAPTSTLGTNFD) and 490-514 (GLNSSQYRESMETSTVGSPTPSPKE). The YPX[LI] motif 2 motif lies at 615–618 (YPVL).

Belongs to the pacC/RIM101 family. Activated by C-terminal proteolytic cleavage by signaling protease (probably palB/RIM13) at neutral to alkaline ambient pH.

It localises to the cytoplasm. It is found in the nucleus. Its function is as follows. Transcription factor that mediates regulation of both acid- and alkaline-expressed genes in response to ambient pH. At alkaline ambient pH, activates transcription of alkaline-expressed genes (including pac1 itself) and represses transcription of acid-expressed genes. This is pH-response transcription factor pacC/RIM101 (pac1) from Sclerotinia sclerotiorum (White mold).